A 499-amino-acid chain; its full sequence is Endoglucanase (499 aa).

Residues 1-29 (MKRSISIFITCLLITLLTMGGMIASPASA) form the signal peptide. Residues His65, 69-70 (WY), Tyr96, and His131 each bind substrate. The Proton donor role is filled by Glu169. A substrate-binding site is contributed by Tyr231. The active-site Nucleophile is the Glu257. Substrate is bound by residues 263-264 (AS), Trp291, and 296-298 (KQE). Residues 350-499 (QENGISVQYR…GKLIWGTEPN (150 aa)) form the CBM3 domain.

This sequence belongs to the glycosyl hydrolase 5 (cellulase A) family.

It carries out the reaction Endohydrolysis of (1-&gt;4)-beta-D-glucosidic linkages in cellulose, lichenin and cereal beta-D-glucans.. The protein is Endoglucanase (eglS) of Bacillus subtilis (strain 168).